The sequence spans 65 residues: MLSRDSSQLTSFNNKDSHDIIEVSQTLNALISIIAKHDHDIARHAQAIADIKKCYNLQMLGILQI.

This is an uncharacterized protein from Rickettsia conorii (strain ATCC VR-613 / Malish 7).